A 300-amino-acid polypeptide reads, in one-letter code: Cation-efflux pump FieF (300 aa).

A helical transmembrane segment spans residues 24-44 (LLIKIFAWWYTGSVSILAALV). 2 residues coordinate Zn(2+): D45 and D49. 2 consecutive transmembrane segments (helical) span residues 82–102 (AALA…LTGI) and 114–134 (AGVG…LVTF). Positions 153 and 157 each coordinate Zn(2+). The next 2 helical transmembrane spans lie at 156–176 (SDVM…YGWH) and 178–198 (ADAL…LRMG).

It belongs to the cation diffusion facilitator (CDF) transporter (TC 2.A.4) family. FieF subfamily. Homodimer.

The protein resides in the cell inner membrane. It catalyses the reaction Zn(2+)(in) + H(+)(out) = Zn(2+)(out) + H(+)(in). The catalysed reaction is Cd(2+)(in) + H(+)(out) = Cd(2+)(out) + H(+)(in). It carries out the reaction Fe(2+)(in) + H(+)(out) = Fe(2+)(out) + H(+)(in). Functionally, divalent metal cation transporter which exports Zn(2+), Cd(2+) and possibly Fe(2+). May be involved in zinc and iron detoxification by efflux. This is Cation-efflux pump FieF from Klebsiella pneumoniae (strain 342).